The primary structure comprises 161 residues: Allophycocyanin alpha chain (161 aa).

N71 carries the post-translational modification N4-methylasparagine. C81 provides a ligand contact to (2R,3E)-phycocyanobilin.

The protein belongs to the phycobiliprotein family. Heterodimer of an alpha and a beta chain. Post-translationally, contains one covalently linked phycocyanobilin chromophore.

It is found in the plastid. The protein localises to the chloroplast thylakoid membrane. In terms of biological role, light-harvesting photosynthetic bile pigment-protein from the phycobiliprotein complex. Allophycocyanin has a maximum absorption at approximately 650 nanometers. The chain is Allophycocyanin alpha chain (apcA) from Galdieria sulphuraria (Red alga).